A 1090-amino-acid chain; its full sequence is Protein transport protein Sec24A (1090 aa).

Disordered regions lie at residues 1 to 260 and 272 to 325; these read MAQP…AHNT and TPQL…TQTP. Over residues 8–28 the composition is skewed to low complexity; sequence AARGAAASLQAQNGAASASGS. Composition is skewed to polar residues over residues 29 to 55, 138 to 151, and 162 to 184; these read PYTNGPVHNTLMSPQVSSSQGYDSQPP, WQYNYPSTGPQTNH, and GNPNLTADHQYVSSGDPALQTSF. Residues 194-236 are compositionally biased toward pro residues; that stretch reads QNPPLPPTFQPGAPPGPPPAGGPPPSRGPAPQKTPPRAAPPPS. 3 stretches are compositionally biased toward polar residues: residues 237-258, 274-286, and 313-325; these read FNSAVNQEGITSNANNGSTAAH, QLVNQNPKTSRSV, and SYPSGPQAFTQTP. Residues Cys428, Cys431, Cys449, and Cys452 each coordinate Zn(2+). The tract at residues 428 to 452 is zinc finger-like; that stretch reads CRSCRTYINPFVNFLDQRRWKCNLC. A Gelsolin-like repeat occupies 963 to 1036; sequence PQPPILQLSV…PESARIAAFI (74 aa).

Belongs to the SEC23/SEC24 family. SEC24 subfamily. COPII is composed of at least five proteins: the Sec23/24 complex, the Sec13/31 complex and Sar1. Interacts with TMED2. Interacts (as part of the Sec23/24 complex) with SEC22B; recruits SEC22B into COPII-coated vesicles for its transport from the endoplasmic reticulum to the Golgi. Interacts with STING1; promoting STING1 translocation to COPII vesicles in a STEEP1-dependent manner. Interacts with TMEM39A. Interacts with SACM1L; this interaction is reduced in the absence of TMEM39A. Interacts with kinase FAM20C; transport of FAM20C from the endoplasmic reticulum to the Golgi is likely to be mediated by COPII vesicles.

Its subcellular location is the cytoplasmic vesicle. It is found in the COPII-coated vesicle membrane. It localises to the endoplasmic reticulum membrane. The protein localises to the cytoplasm. The protein resides in the cytosol. In terms of biological role, component of the coat protein complex II (COPII) which promotes the formation of transport vesicles from the endoplasmic reticulum (ER). The coat has two main functions, the physical deformation of the endoplasmic reticulum membrane into vesicles and the selection of cargo molecules for their transport to the Golgi complex. Plays a central role in cargo selection within the COPII complex and together with SEC24B may have a different specificity compared to SEC24C and SEC24D. May package preferentially cargos with cytoplasmic DxE or LxxLE motifs and may also recognize conformational epitopes. The sequence is that of Protein transport protein Sec24A from Mus musculus (Mouse).